A 319-amino-acid polypeptide reads, in one-letter code: Serine/threonine-protein phosphatase PP1 isozyme 2 (319 aa).

The Mn(2+) site is built by Asp-61, His-63, Asp-89, and Asn-121. His-122 acts as the Proton donor in catalysis. Residues His-170 and His-245 each contribute to the Mn(2+) site.

It belongs to the PPP phosphatase family. PP-1 subfamily. Mn(2+) is required as a cofactor.

It catalyses the reaction O-phospho-L-seryl-[protein] + H2O = L-seryl-[protein] + phosphate. The enzyme catalyses O-phospho-L-threonyl-[protein] + H2O = L-threonyl-[protein] + phosphate. This chain is Serine/threonine-protein phosphatase PP1 isozyme 2, found in Acetabularia peniculus (Green alga).